The following is a 181-amino-acid chain: Large ribosomal subunit protein uL10 (181 aa).

The protein belongs to the universal ribosomal protein uL10 family. Part of the ribosomal stalk of the 50S ribosomal subunit. The N-terminus interacts with L11 and the large rRNA to form the base of the stalk. The C-terminus forms an elongated spine to which L12 dimers bind in a sequential fashion forming a multimeric L10(L12)X complex.

Forms part of the ribosomal stalk, playing a central role in the interaction of the ribosome with GTP-bound translation factors. In Acidobacterium capsulatum (strain ATCC 51196 / DSM 11244 / BCRC 80197 / JCM 7670 / NBRC 15755 / NCIMB 13165 / 161), this protein is Large ribosomal subunit protein uL10.